Here is a 53-residue protein sequence, read N- to C-terminus: MFRWGIIFLVIALIAAALGFGGLAGTAAGAAKIVFVVGIILFLLSLFTGRKRP.

Helical transmembrane passes span 4 to 24 and 30 to 47; these read WGIIFLVIALIAAALGFGGLA and AAKIVFVVGIILFLLSLF.

Belongs to the UPF0391 family.

It localises to the cell membrane. This chain is UPF0391 membrane protein PC1_0455, found in Pectobacterium carotovorum subsp. carotovorum (strain PC1).